A 529-amino-acid polypeptide reads, in one-letter code: Tyrosinase (529 aa).

A signal peptide spans Met1 to Gly18. The Lumenal, melanosome segment spans residues Gln19–Pro476. Residues Asn86, Asn111, and Asn161 are each glycosylated (N-linked (GlcNAc...) asparagine). The Cu cation site is built by His180, His202, and His211. 2 N-linked (GlcNAc...) asparagine glycosylation sites follow: Asn230 and Asn290. The interval Ser293–Pro313 is disordered. 2 N-linked (GlcNAc...) asparagine glycosylation sites follow: Asn337 and Asn356. 2 residues coordinate Cu cation: His363 and His367. Asn371 carries an N-linked (GlcNAc...) asparagine glycan. His390 is a Cu cation binding site. The chain crosses the membrane as a helical span at residues Trp477–Leu497. Topologically, residues Ala498 to Phe529 are cytoplasmic.

The protein belongs to the tyrosinase family. It depends on Cu(2+) as a cofactor.

Its subcellular location is the melanosome membrane. The protein resides in the melanosome. It catalyses the reaction 2 L-dopa + O2 = 2 L-dopaquinone + 2 H2O. The catalysed reaction is L-tyrosine + O2 = L-dopaquinone + H2O. In terms of biological role, this is a copper-containing oxidase that functions in the formation of pigments such as melanins and other polyphenolic compounds. Catalyzes the initial and rate limiting step in the cascade of reactions leading to melanin production from tyrosine. In addition to hydroxylating tyrosine to DOPA (3,4-dihydroxyphenylalanine), also catalyzes the oxidation of DOPA to DOPA-quinone, and possibly the oxidation of DHI (5,6-dihydroxyindole) to indole-5,6 quinone. This Gallus gallus (Chicken) protein is Tyrosinase (TYR).